The chain runs to 246 residues: tRNA (guanine-N(7)-)-methyltransferase (246 aa).

S-adenosyl-L-methionine contacts are provided by E76, E101, D128, and D151. D151 is an active-site residue. K155 provides a ligand contact to substrate. Positions 157–162 are interaction with RNA; it reads RHNKRR. Substrate-binding positions include D187 and 222 to 225; that span reads TKFE.

The protein belongs to the class I-like SAM-binding methyltransferase superfamily. TrmB family.

It catalyses the reaction guanosine(46) in tRNA + S-adenosyl-L-methionine = N(7)-methylguanosine(46) in tRNA + S-adenosyl-L-homocysteine. The protein operates within tRNA modification; N(7)-methylguanine-tRNA biosynthesis. In terms of biological role, catalyzes the formation of N(7)-methylguanine at position 46 (m7G46) in tRNA. The sequence is that of tRNA (guanine-N(7)-)-methyltransferase from Dechloromonas aromatica (strain RCB).